A 773-amino-acid polypeptide reads, in one-letter code: DNA gyrase subunit B (773 aa).

The region spanning 416–530 (SEIFLVEGDS…QGHVYIAQAP (115 aa)) is the Toprim domain. Mg(2+) is bound by residues Glu422, Asp495, and Asp497.

The protein belongs to the type II topoisomerase GyrB family. In terms of assembly, heterotetramer, composed of two GyrA and two GyrB chains. In the heterotetramer, GyrA contains the active site tyrosine that forms a transient covalent intermediate with DNA, while GyrB binds cofactors and catalyzes ATP hydrolysis. Requires Mg(2+) as cofactor. Mn(2+) serves as cofactor. The cofactor is Ca(2+).

It is found in the cytoplasm. It carries out the reaction ATP-dependent breakage, passage and rejoining of double-stranded DNA.. Its function is as follows. A type II topoisomerase that negatively supercoils closed circular double-stranded (ds) DNA in an ATP-dependent manner to modulate DNA topology and maintain chromosomes in an underwound state. Negative supercoiling favors strand separation, and DNA replication, transcription, recombination and repair, all of which involve strand separation. Also able to catalyze the interconversion of other topological isomers of dsDNA rings, including catenanes and knotted rings. Type II topoisomerases break and join 2 DNA strands simultaneously in an ATP-dependent manner. This Helicobacter pylori (strain ATCC 700392 / 26695) (Campylobacter pylori) protein is DNA gyrase subunit B.